A 395-amino-acid polypeptide reads, in one-letter code: Nicotinamide/nicotinic acid mononucleotide adenylyltransferase 2 (395 aa).

2 disordered regions span residues 1–34 (MDPT…SGPI) and 62–102 (KKNA…NGID). Residues 9 to 24 (FKPPQPNEELQPPPDP) are compositionally biased toward pro residues. 3 positions are modified to phosphoserine: Ser85, Ser89, and Ser90. NAD(+)-binding residues include Ser167 and Phe168. Residues His175 and Arg209 each coordinate ATP. Residues Thr247, Gly282, Asp284, Trp295, Arg314, and Asn345 each coordinate NAD(+). Position 350 to 353 (350 to 353 (TKVR)) interacts with ATP.

This sequence belongs to the eukaryotic NMN adenylyltransferase family. The cofactor is Co(2+).

The protein localises to the nucleus. The catalysed reaction is beta-nicotinamide D-ribonucleotide + ATP + H(+) = diphosphate + NAD(+). It catalyses the reaction nicotinate beta-D-ribonucleotide + ATP + H(+) = deamido-NAD(+) + diphosphate. The protein operates within cofactor biosynthesis; NAD(+) biosynthesis; deamido-NAD(+) from nicotinate D-ribonucleotide: step 1/1. It participates in cofactor biosynthesis; NAD(+) biosynthesis; NAD(+) from nicotinamide D-ribonucleotide: step 1/1. Its function is as follows. Catalyzes the formation of NAD(+) from nicotinamide mononucleotide (NMN) and ATP. Can also use the deamidated form; nicotinic acid mononucleotide (NaMN) as substrate to form deamido-NAD(+) (NaAD). Key enzyme in both de novo and salvage pathways for NAD(+) biosynthesis. Predominantly acts in the salvage pathways via NMN. This chain is Nicotinamide/nicotinic acid mononucleotide adenylyltransferase 2, found in Saccharomyces cerevisiae (strain ATCC 204508 / S288c) (Baker's yeast).